The chain runs to 508 residues: Argininosuccinate lyase (508 aa).

Belongs to the lyase 1 family. Argininosuccinate lyase subfamily.

The protein resides in the cytoplasm. The catalysed reaction is 2-(N(omega)-L-arginino)succinate = fumarate + L-arginine. The protein operates within amino-acid biosynthesis; L-arginine biosynthesis; L-arginine from L-ornithine and carbamoyl phosphate: step 3/3. The polypeptide is Argininosuccinate lyase (Methanopyrus kandleri (strain AV19 / DSM 6324 / JCM 9639 / NBRC 100938)).